The chain runs to 267 residues: Urease accessory protein UreD (267 aa).

The protein belongs to the UreD family. In terms of assembly, ureD, UreF and UreG form a complex that acts as a GTP-hydrolysis-dependent molecular chaperone, activating the urease apoprotein by helping to assemble the nickel containing metallocenter of UreC. The UreE protein probably delivers the nickel.

The protein resides in the cytoplasm. In terms of biological role, required for maturation of urease via the functional incorporation of the urease nickel metallocenter. In Synechococcus sp. (strain JA-2-3B'a(2-13)) (Cyanobacteria bacterium Yellowstone B-Prime), this protein is Urease accessory protein UreD.